A 672-amino-acid polypeptide reads, in one-letter code: DNA polymerase eta (672 aa).

The UmuC domain occupies 14 to 254; the sequence is IAHVDMDCFY…LPIKKMKQLG (241 aa). Residues aspartate 18 and methionine 19 each contribute to the Mg(2+) site. Mn(2+) contacts are provided by aspartate 18 and methionine 19. Tyrosine 23 and arginine 60 together coordinate a 2'-deoxyribonucleoside 5'-triphosphate. Mg(2+)-binding residues include aspartate 120 and glutamate 121. Positions 120 and 121 each coordinate Mn(2+). Glutamate 121 serves as the catalytic Proton acceptor. DNA-binding stretches follow at residues 318-325 and 362-383; these read KTFPGPRA and TLHA…PSKS. 2 disordered regions span residues 521 to 617 and 648 to 672; these read VSCP…TDWG and QFNT…PLNR. Composition is skewed to polar residues over residues 523-544 and 570-586; these read CPSN…TQTK and YNAT…DSTV. Composition is skewed to low complexity over residues 587–602 and 651–662; these read SSAS…SHNS and TGKSKGDGSTSS.

Belongs to the DNA polymerase type-Y family. As to quaternary structure, interacts with PCNA1 and PCNA2. The interaction with PCNA2 is required for translesion synthesis (TLS) to repair UV photoproducts. Mg(2+) is required as a cofactor. It depends on Mn(2+) as a cofactor. Constitutively expressed in roots, stems, leaves, flowers and siliques.

The protein resides in the nucleus. It carries out the reaction DNA(n) + a 2'-deoxyribonucleoside 5'-triphosphate = DNA(n+1) + diphosphate. The enzyme in complex with the DNA substrate binds a third divalent metal cation. The binding of this third divalent cation, which is coordinated by water molecules and two oxygen atoms from DNA and dNTP, is essential for catalyzing the DNA synthesis. In terms of biological role, error-free DNA polymerase specifically involved in DNA repair. Plays an important role in translesion synthesis (TLS), where the normal high fidelity DNA polymerases cannot proceed and DNA synthesis stalls. Plays an important role in the repair of UV-induced pyrimidine dimers and confers resistance to ultraviolet light. Depending on the context, it inserts the correct base, but may cause base transitions and transversions. Forms a Schiff base with 5'-deoxyribose phosphate at abasic sites, but does not have lyase activity. Targets POLI to replication foci. Exhibits cyclobutane dimer nonmutagenic bypass activity in vitro. The sequence is that of DNA polymerase eta (POLH) from Arabidopsis thaliana (Mouse-ear cress).